Reading from the N-terminus, the 394-residue chain is uncharacterized protein (394 aa).

The 45-residue stretch at 7 to 51 (RKVIPNMPDLILRKIFDQYDYPVLCKMERVCRRWTNIINSKFRKE) folds into the F-box domain.

This is an uncharacterized protein from Caenorhabditis elegans.